The chain runs to 181 residues: Segregation and condensation protein B (181 aa).

This sequence belongs to the ScpB family. In terms of assembly, homodimer. Homodimerization may be required to stabilize the binding of ScpA to the Smc head domains. Component of a cohesin-like complex composed of ScpA, ScpB and the Smc homodimer, in which ScpA and ScpB bind to the head domain of Smc. The presence of the three proteins is required for the association of the complex with DNA.

The protein resides in the cytoplasm. Participates in chromosomal partition during cell division. May act via the formation of a condensin-like complex containing Smc and ScpA that pull DNA away from mid-cell into both cell halves. The sequence is that of Segregation and condensation protein B from Desulforamulus reducens (strain ATCC BAA-1160 / DSM 100696 / MI-1) (Desulfotomaculum reducens).